The sequence spans 393 residues: Putative B3 domain-containing protein Os06g0632500 (393 aa).

3 DNA-binding regions (TF-B3) span residues L27–G123, R141–N238, and N316–R393.

It localises to the nucleus. The sequence is that of Putative B3 domain-containing protein Os06g0632500 from Oryza sativa subsp. japonica (Rice).